A 199-amino-acid polypeptide reads, in one-letter code: UPF0301 protein Ajs_3573 (199 aa).

Belongs to the UPF0301 (AlgH) family.

The chain is UPF0301 protein Ajs_3573 from Acidovorax sp. (strain JS42).